The sequence spans 692 residues: Putative ESX-1 scaffolding and assembly protein SaeA (692 aa).

Positions 1 to 21 (MGERGELVSDLHPSDDHDADP) are enriched in basic and acidic residues. 2 disordered regions span residues 1 to 23 (MGER…DPRL) and 87 to 134 (PAAP…TTGF). The span at 89–107 (APEPDPPPVPEPQPEPEPG) shows a compositional bias: pro residues.

Its function is as follows. May be involved in assembly of the ESX-1 / type VII specialized secretion system (T7SS), which exports several proteins including EsxA and EsxB. Involved in DNA conjugation in recipient (MKD8) but not donor (mc(2)155) strain. The sequence is that of Putative ESX-1 scaffolding and assembly protein SaeA (saeA) from Mycolicibacterium smegmatis (strain MKD8) (Mycobacterium smegmatis).